Here is a 149-residue protein sequence, read N- to C-terminus: Placenta growth factor (149 aa).

An N-terminal signal peptide occupies residues 1–18 (MPTVRLFTCFLQLLTGLV). Residue N33 is glycosylated (N-linked (GlcNAc...) asparagine). Intrachain disulfides connect C52/C94, C83/C128, and C87/C130. Residue N101 is glycosylated (N-linked (GlcNAc...) asparagine).

It belongs to the PDGF/VEGF growth factor family. In terms of assembly, antiparallel homodimer; disulfide-linked. Also found as heterodimer with VEGFA/VEGF.

Its subcellular location is the secreted. Growth factor active in angiogenesis and endothelial cell growth, stimulating their proliferation and migration. It binds to the receptor FLT1/VEGFR-1. Also promotes cell tumor growth. The sequence is that of Placenta growth factor (PGF) from Bos taurus (Bovine).